A 414-amino-acid chain; its full sequence is FAD-dependent monooxygenase adaC (414 aa).

The FAD site is built by Glu-32, Ala-43, Arg-115, Asp-325, and Gly-338.

This sequence belongs to the paxM FAD-dependent monooxygenase family. FAD serves as cofactor.

The enzyme catalyses 3-(2,4-dioxopentyl)-3,6,8,9-tetrahydroxy-1-oxo-1,2,3,4-tetrahydroanthracene-2-carboxyl-[ACP] + NADPH + O2 + H(+) = 3-(2,4-dioxopentyl)-2,3,6,8,9-pentahydroxy-1-oxo-1,2,3,4-tetrahydroanthracene-2-carboxyl-[ACP] + NADP(+) + H2O. The protein operates within secondary metabolite biosynthesis. In terms of biological role, FAD-dependent monooxygenase; part of the gene cluster that mediates the biosynthesis of the linear tetracyclic TAN-1612 neuropeptide Y receptor antagonist. The decaketide backbone of TAN-1612 is synthesized by the non-reducing polyketide synthase adaA via condensation of one acetyl-CoA starter unit with 9 malonyl-CoA units. The FAD-dependent monooxygenase adaC then performs hydroxylation at C2 while the polaketide chain is still attached to the NRPKS adaA. The alpha-hydroxylation step at C2 appears to be crucial for the following C18-C1 Claisen cyclization and release of the C9-hydroxyl version of TAN-1612 from the NRPKS adaA, two steps performed by the lactamase-like protein adaB. Finally, the O-methyltransferase adaD performs the C9 O-methylation to complete the biosynthesis of TAN-1612. The sequence is that of FAD-dependent monooxygenase adaC from Aspergillus niger (strain ATCC MYA-4892 / CBS 513.88 / FGSC A1513).